We begin with the raw amino-acid sequence, 500 residues long: Glutamate decarboxylase (500 aa).

The residue at position 277 (lysine 277) is an N6-(pyridoxal phosphate)lysine. Residues 469-500 are calmodulin-binding; the sequence is VHKKTDSEVQLEMITAWKKFVEEKKKKTNRVC.

Belongs to the group II decarboxylase family. As to quaternary structure, homodimer. Pyridoxal 5'-phosphate serves as cofactor.

The catalysed reaction is L-glutamate + H(+) = 4-aminobutanoate + CO2. Its function is as follows. Catalyzes the production of GABA. The calmodulin-binding is calcium-dependent and it is proposed that this may, directly or indirectly, form a calcium regulated control of GABA biosynthesis. In Petunia hybrida (Petunia), this protein is Glutamate decarboxylase (GAD).